The chain runs to 501 residues: Tegument protein US24 (501 aa).

It belongs to the herpesviridae US22 family.

It is found in the virion tegument. In Human cytomegalovirus (strain Merlin) (HHV-5), this protein is Tegument protein US24 (US24).